The following is a 249-amino-acid chain: Phosphoribosylaminoimidazole-succinocarboxamide synthase (249 aa).

Belongs to the SAICAR synthetase family.

The enzyme catalyses 5-amino-1-(5-phospho-D-ribosyl)imidazole-4-carboxylate + L-aspartate + ATP = (2S)-2-[5-amino-1-(5-phospho-beta-D-ribosyl)imidazole-4-carboxamido]succinate + ADP + phosphate + 2 H(+). It participates in purine metabolism; IMP biosynthesis via de novo pathway; 5-amino-1-(5-phospho-D-ribosyl)imidazole-4-carboxamide from 5-amino-1-(5-phospho-D-ribosyl)imidazole-4-carboxylate: step 1/2. In Roseiflexus sp. (strain RS-1), this protein is Phosphoribosylaminoimidazole-succinocarboxamide synthase.